The chain runs to 301 residues: Protein FdhE homolog (301 aa).

It belongs to the FdhE family.

It localises to the cytoplasm. In terms of biological role, necessary for formate dehydrogenase activity. The polypeptide is Protein FdhE homolog (Shewanella baltica (strain OS195)).